The following is a 207-amino-acid chain: Uracil phosphoribosyltransferase (207 aa).

5-phospho-alpha-D-ribose 1-diphosphate contacts are provided by residues Arg-77, Arg-102, and 129-137 (DPMLATGGS). Uracil-binding positions include Ile-192 and 197-199 (GDA). Residue Asp-198 participates in 5-phospho-alpha-D-ribose 1-diphosphate binding.

Belongs to the UPRTase family. Requires Mg(2+) as cofactor.

The catalysed reaction is UMP + diphosphate = 5-phospho-alpha-D-ribose 1-diphosphate + uracil. It participates in pyrimidine metabolism; UMP biosynthesis via salvage pathway; UMP from uracil: step 1/1. Allosterically activated by GTP. Catalyzes the conversion of uracil and 5-phospho-alpha-D-ribose 1-diphosphate (PRPP) to UMP and diphosphate. This chain is Uracil phosphoribosyltransferase, found in Mycobacterium marinum (strain ATCC BAA-535 / M).